The primary structure comprises 304 residues: Oxygen-dependent coproporphyrinogen-III oxidase (304 aa).

Residue serine 94 coordinates substrate. Residues histidine 98 and histidine 108 each contribute to the a divalent metal cation site. Histidine 108 (proton donor) is an active-site residue. Asparagine 110–arginine 112 contributes to the substrate binding site. The a divalent metal cation site is built by histidine 147 and histidine 177. The segment at tyrosine 242–glutamate 277 is important for dimerization. Residue glycine 260–arginine 262 participates in substrate binding.

It belongs to the aerobic coproporphyrinogen-III oxidase family. As to quaternary structure, homodimer. A divalent metal cation is required as a cofactor.

Its subcellular location is the cytoplasm. The enzyme catalyses coproporphyrinogen III + O2 + 2 H(+) = protoporphyrinogen IX + 2 CO2 + 2 H2O. It participates in porphyrin-containing compound metabolism; protoporphyrin-IX biosynthesis; protoporphyrinogen-IX from coproporphyrinogen-III (O2 route): step 1/1. Involved in the heme biosynthesis. Catalyzes the aerobic oxidative decarboxylation of propionate groups of rings A and B of coproporphyrinogen-III to yield the vinyl groups in protoporphyrinogen-IX. The protein is Oxygen-dependent coproporphyrinogen-III oxidase of Shewanella halifaxensis (strain HAW-EB4).